A 260-amino-acid chain; its full sequence is 5'-nucleotidase SurE (260 aa).

A divalent metal cation contacts are provided by Asp-8, Asp-9, Ser-43, and Asn-96.

Belongs to the SurE nucleotidase family. A divalent metal cation serves as cofactor.

Its subcellular location is the cytoplasm. It carries out the reaction a ribonucleoside 5'-phosphate + H2O = a ribonucleoside + phosphate. In terms of biological role, nucleotidase that shows phosphatase activity on nucleoside 5'-monophosphates. This chain is 5'-nucleotidase SurE, found in Ruegeria pomeroyi (strain ATCC 700808 / DSM 15171 / DSS-3) (Silicibacter pomeroyi).